The sequence spans 189 residues: GTP cyclohydrolase 1 (189 aa).

Positions 78, 81, and 150 each coordinate Zn(2+).

This sequence belongs to the GTP cyclohydrolase I family. In terms of assembly, homomer.

The catalysed reaction is GTP + H2O = 7,8-dihydroneopterin 3'-triphosphate + formate + H(+). It functions in the pathway cofactor biosynthesis; 7,8-dihydroneopterin triphosphate biosynthesis; 7,8-dihydroneopterin triphosphate from GTP: step 1/1. The protein is GTP cyclohydrolase 1 of Bacillus anthracis (strain A0248).